Here is a 199-residue protein sequence, read N- to C-terminus: FMN-dependent NADH:quinone oxidoreductase (199 aa).

S10 provides a ligand contact to FMN.

It belongs to the azoreductase type 1 family. As to quaternary structure, homodimer. FMN serves as cofactor.

It catalyses the reaction 2 a quinone + NADH + H(+) = 2 a 1,4-benzosemiquinone + NAD(+). The catalysed reaction is N,N-dimethyl-1,4-phenylenediamine + anthranilate + 2 NAD(+) = 2-(4-dimethylaminophenyl)diazenylbenzoate + 2 NADH + 2 H(+). Functionally, quinone reductase that provides resistance to thiol-specific stress caused by electrophilic quinones. In terms of biological role, also exhibits azoreductase activity. Catalyzes the reductive cleavage of the azo bond in aromatic azo compounds to the corresponding amines. The protein is FMN-dependent NADH:quinone oxidoreductase of Cellvibrio japonicus (strain Ueda107) (Pseudomonas fluorescens subsp. cellulosa).